The primary structure comprises 138 residues: Large ribosomal subunit protein bL19 (138 aa).

This sequence belongs to the bacterial ribosomal protein bL19 family.

Its function is as follows. This protein is located at the 30S-50S ribosomal subunit interface and may play a role in the structure and function of the aminoacyl-tRNA binding site. The polypeptide is Large ribosomal subunit protein bL19 (Rickettsia africae (strain ESF-5)).